The following is a 404-amino-acid chain: Probable tRNA sulfurtransferase (404 aa).

Positions 60 to 165 constitute a THUMP domain; it reads TAVAESLKQV…EEAAYLSYET (106 aa). Residues 183 to 184, 208 to 209, arginine 265, glycine 287, and glutamine 296 each bind ATP; these read ML and HF.

The protein belongs to the ThiI family.

Its subcellular location is the cytoplasm. It carries out the reaction [ThiI sulfur-carrier protein]-S-sulfanyl-L-cysteine + a uridine in tRNA + 2 reduced [2Fe-2S]-[ferredoxin] + ATP + H(+) = [ThiI sulfur-carrier protein]-L-cysteine + a 4-thiouridine in tRNA + 2 oxidized [2Fe-2S]-[ferredoxin] + AMP + diphosphate. The catalysed reaction is [ThiS sulfur-carrier protein]-C-terminal Gly-Gly-AMP + S-sulfanyl-L-cysteinyl-[cysteine desulfurase] + AH2 = [ThiS sulfur-carrier protein]-C-terminal-Gly-aminoethanethioate + L-cysteinyl-[cysteine desulfurase] + A + AMP + 2 H(+). It functions in the pathway cofactor biosynthesis; thiamine diphosphate biosynthesis. In terms of biological role, catalyzes the ATP-dependent transfer of a sulfur to tRNA to produce 4-thiouridine in position 8 of tRNAs, which functions as a near-UV photosensor. Also catalyzes the transfer of sulfur to the sulfur carrier protein ThiS, forming ThiS-thiocarboxylate. This is a step in the synthesis of thiazole, in the thiamine biosynthesis pathway. The sulfur is donated as persulfide by IscS. This Streptococcus pneumoniae (strain ATCC 700669 / Spain 23F-1) protein is Probable tRNA sulfurtransferase.